Consider the following 1250-residue polypeptide: TBC1 domain family member 9B (1250 aa).

GRAM domains lie at 142-209 and 288-356; these read LKMR…EKNA and ECYR…EKAD. Thr397 carries the post-translational modification Phosphothreonine. Positions 397-443 are disordered; it reads TPSKQPGSIGSRKASVVDPSTESSPAPQEGSEQPASPASPLSSRQSF. Phosphoserine occurs at positions 411, 432, 435, and 463. Residues 414–443 show a composition bias toward polar residues; the sequence is DPSTESSPAPQEGSEQPASPASPLSSRQSF. Residues 508–695 form the Rab-GAP TBC domain; it reads GIPESLRGEL…VIVDCFFYEG (188 aa). Residues 668–688 traverse the membrane as a helical segment; that stretch reads LSWFLTLFLSVMPFESAVVIV. The EF-hand domain occupies 879-914; the sequence is HTPLLAGRMFRLLDENKDSLINFKEFVTGMSGMYHG. 3 disordered regions span residues 974-999, 1069-1093, and 1128-1157; these read LPQE…PDYR, SART…ELHQ, and VEGG…MSSY. Basic and acidic residues predominate over residues 984 to 999; sequence SEERGEEKGTSSPDYR. Ser1241 carries the phosphoserine modification.

The protein resides in the membrane. Functionally, may act as a GTPase-activating protein for Rab family protein(s). This chain is TBC1 domain family member 9B (TBC1D9B), found in Homo sapiens (Human).